The chain runs to 1403 residues: DNA-directed RNA polymerase subunit beta' (1403 aa).

Residues C70, C72, C85, and C88 each coordinate Zn(2+). Residues D461, D463, and D465 each coordinate Mg(2+). Residues 687–708 are disordered; the sequence is QQISQEETTGDRDGKRETRKQP. Basic and acidic residues predominate over residues 695 to 706; that stretch reads TGDRDGKRETRK. Residues C805, C879, C886, and C889 each contribute to the Zn(2+) site. The segment at 1381-1403 is disordered; that stretch reads THGDTGPLGEPSRPVGTQTTGAA.

Belongs to the RNA polymerase beta' chain family. In terms of assembly, the RNAP catalytic core consists of 2 alpha, 1 beta, 1 beta' and 1 omega subunit. When a sigma factor is associated with the core the holoenzyme is formed, which can initiate transcription. Mg(2+) is required as a cofactor. The cofactor is Zn(2+).

The catalysed reaction is RNA(n) + a ribonucleoside 5'-triphosphate = RNA(n+1) + diphosphate. In terms of biological role, DNA-dependent RNA polymerase catalyzes the transcription of DNA into RNA using the four ribonucleoside triphosphates as substrates. The polypeptide is DNA-directed RNA polymerase subunit beta' (Myxococcus xanthus (strain DK1622)).